The sequence spans 766 residues: ABC-type oligopeptide transporter ABCB9 (766 aa).

A run of 8 helical transmembrane segments spans residues 7–27 (VVVT…IYVF), 47–67 (VLDL…ATIG), 84–104 (LVIT…LLLF), 116–136 (FWAL…LWWL), 185–205 (VAFL…ETFL), 225–245 (FSTA…AAGI), 319–339 (VFMF…FPII), and 416–436 (SGLT…HLVI). One can recognise an ABC transmembrane type-1 domain in the interval 188-471 (LVAASFFLIV…VGSVYSGLMQ (284 aa)). One can recognise an ABC transporter domain in the interval 504-740 (VDFENVTFTY…GGLYAKLVQR (237 aa)). Residue 539–546 (GPSGSGKS) participates in ATP binding.

It belongs to the ABC transporter superfamily. ABCB family. MHC peptide exporter (TC 3.A.1.209) subfamily. Homodimer. Interacts (via TMD0 region) with LAMP1; this interaction strongly stabilizes ABCB9 and protects ABCB9 against lysosomal degradation. Interacts (via TMD0 region) with LAMP2 (isoform LAMP-2B). Interacts (via TMD0) with YIF1B; this interaction allows (but is not essential) the ER-to-Golgi trafficking and strongly depends on a salt bridge within TMD0. Highly expressed in testis, and at moderate levels in brain, spinal cord, and thyroid. Not expressed in monocytes but strongly expressed during differentiation of monocytes to dendritic cells and macrophages.

The protein resides in the lysosome membrane. The catalysed reaction is a [oligopeptide](in) + ATP + H2O = a [oligopeptide](out) + ADP + phosphate + H(+). Its activity is regulated as follows. Transport activity is limited by threshold levels of luminal peptide. ATP hydrolysis is reduced in the presence of the spatial challenging 18-mer peptide by 50% and the branched 16-mer peptide by 75%. Transport rate of the longer peptides is strongly reduced. ATP-dependent low-affinity peptide transporter which translocates a broad spectrum of peptides from the cytosol to the lysosomal lumen for degradation. Displays a broad peptide length specificity from 6-mer up to at least 59-mer peptides with an optimum of 23-mers. Binds and transports smaller and larger peptides with the same affinity. Favors positively charged, aromatic or hydrophobic residues in the N- and C-terminal positions whereas negatively charged residues as well as asparagine and methionine are not favored. The chain is ABC-type oligopeptide transporter ABCB9 from Homo sapiens (Human).